We begin with the raw amino-acid sequence, 352 residues long: Rhodopsin (352 aa).

Residues methionine 1–alanine 36 are Extracellular-facing. Asparagine 2 and asparagine 15 each carry an N-linked (GlcNAc...) asparagine glycan. Residues tyrosine 37–valine 61 traverse the membrane as a helical segment. Residues threonine 62–asparagine 73 are Cytoplasmic-facing. The helical transmembrane segment at tyrosine 74–tyrosine 96 threads the bilayer. At threonine 97–cysteine 110 the chain is on the extracellular side. Cysteines 110 and 187 form a disulfide. The chain crosses the membrane as a helical span at residues asparagine 111–isoleucine 133. The 'Ionic lock' involved in activated form stabilization signature appears at glutamate 134 to tryptophan 136. The Cytoplasmic segment spans residues glutamate 134–histidine 152. The helical transmembrane segment at alanine 153 to valine 173 threads the bilayer. Topologically, residues glycine 174–serine 202 are extracellular. An N-linked (GlcNAc...) asparagine glycan is attached at asparagine 200. Residues phenylalanine 203–glycine 224 traverse the membrane as a helical segment. Over arginine 225 to arginine 252 the chain is Cytoplasmic. A helical membrane pass occupies residues methionine 253 to tyrosine 274. At isoleucine 275–leucine 286 the chain is on the extracellular side. The chain crosses the membrane as a helical span at residues phenylalanine 287–cysteine 308. Lysine 296 is modified (N6-(retinylidene)lysine). Residues methionine 309 to alanine 352 are Cytoplasmic-facing. 2 S-palmitoyl cysteine lipidation sites follow: cysteine 322 and cysteine 323. A disordered region spans residues glutamate 331 to alanine 352. Residues serine 342–alanine 352 are compositionally biased toward low complexity.

It belongs to the G-protein coupled receptor 1 family. Opsin subfamily. Post-translationally, phosphorylated on some or all of the serine and threonine residues present in the C-terminal region. Contains one covalently linked retinal chromophore.

The protein resides in the membrane. The protein localises to the cell projection. Its subcellular location is the cilium. It localises to the photoreceptor outer segment. In terms of biological role, photoreceptor required for image-forming vision at low light intensity. While most salt water fish species use retinal as chromophore, most freshwater fish use 3-dehydroretinal, or a mixture of retinal and 3-dehydroretinal. Light-induced isomerization of 11-cis to all-trans retinal triggers a conformational change that activates signaling via G-proteins. Subsequent receptor phosphorylation mediates displacement of the bound G-protein alpha subunit by arrestin and terminates signaling. The sequence is that of Rhodopsin (rho) from Gobius niger (Black goby).